The following is a 321-amino-acid chain: HPr kinase/phosphorylase (321 aa).

Catalysis depends on residues histidine 143 and lysine 164. 158-165 (GKSGVGKS) lines the ATP pocket. Serine 165 is a binding site for Mg(2+). The active-site Proton acceptor; for phosphorylation activity. Proton donor; for dephosphorylation activity is the aspartate 182. The segment at 206 to 215 (MEIRGLGILN) is important for the catalytic mechanism of both phosphorylation and dephosphorylation. Residue glutamate 207 participates in Mg(2+) binding. Residue arginine 248 is part of the active site. An important for the catalytic mechanism of dephosphorylation region spans residues 269–274 (PVRPGR).

This sequence belongs to the HPrK/P family. As to quaternary structure, homohexamer. Requires Mg(2+) as cofactor.

It carries out the reaction [HPr protein]-L-serine + ATP = [HPr protein]-O-phospho-L-serine + ADP + H(+). It catalyses the reaction [HPr protein]-O-phospho-L-serine + phosphate + H(+) = [HPr protein]-L-serine + diphosphate. Functionally, catalyzes the ATP- as well as the pyrophosphate-dependent phosphorylation of a specific serine residue in HPr, a phosphocarrier protein of the phosphoenolpyruvate-dependent sugar phosphotransferase system (PTS). HprK/P also catalyzes the pyrophosphate-producing, inorganic phosphate-dependent dephosphorylation (phosphorolysis) of seryl-phosphorylated HPr (P-Ser-HPr). The sequence is that of HPr kinase/phosphorylase from Leptospira interrogans serogroup Icterohaemorrhagiae serovar copenhageni (strain Fiocruz L1-130).